Reading from the N-terminus, the 298-residue chain is Probable porphobilinogen deaminase (298 aa).

Cys241 carries the S-(dipyrrolylmethanemethyl)cysteine modification.

Belongs to the HMBS family. Dipyrromethane serves as cofactor.

The catalysed reaction is 4 porphobilinogen + H2O = hydroxymethylbilane + 4 NH4(+). It functions in the pathway porphyrin-containing compound metabolism; protoporphyrin-IX biosynthesis; coproporphyrinogen-III from 5-aminolevulinate: step 2/4. Its function is as follows. Tetrapolymerization of the monopyrrole PBG into the hydroxymethylbilane pre-uroporphyrinogen in several discrete steps. This Methanopyrus kandleri (strain AV19 / DSM 6324 / JCM 9639 / NBRC 100938) protein is Probable porphobilinogen deaminase.